Consider the following 240-residue polypeptide: Bactofilin BacP (240 aa).

The tract at residues Asp-116 to Arg-240 is interacts with PadC. Positions Val-117–Arg-240 are disordered. Residues Arg-126–Ala-150 show a composition bias toward low complexity. Over residues Arg-151–Pro-173 the composition is skewed to pro residues. A compositionally biased stretch (basic residues) spans Ala-229–Arg-240.

It belongs to the bactofilin family. In terms of assembly, interacts with BacN and probably also BacO, the 3 proteins colocalize as an extended structure. Interacts with PadC.

The protein localises to the cytoplasm. It is found in the cytoskeleton. Functionally, a non-essential component of the chromosome segregation machinery. Positions the ParA-ParB-parS chromosome segregation machinery within the cell; BacP seems to be the most important bactofilin in this process. Forms a heteropolymeric, subpolar scaffold in the cell; BacP probably forms the core, BacO contributes to position and integrity while BacN does not seem to contribute to assembly. This Myxococcus xanthus (strain DK1622) protein is Bactofilin BacP.